We begin with the raw amino-acid sequence, 190 residues long: Threonylcarbamoyl-AMP synthase (190 aa).

The 184-residue stretch at 7-190 (IGSIAAAVDL…ALTGELFRQG (184 aa)) folds into the YrdC-like domain.

Belongs to the SUA5 family. TsaC subfamily.

It is found in the cytoplasm. It carries out the reaction L-threonine + hydrogencarbonate + ATP = L-threonylcarbamoyladenylate + diphosphate + H2O. Its function is as follows. Required for the formation of a threonylcarbamoyl group on adenosine at position 37 (t(6)A37) in tRNAs that read codons beginning with adenine. Catalyzes the conversion of L-threonine, HCO(3)(-)/CO(2) and ATP to give threonylcarbamoyl-AMP (TC-AMP) as the acyladenylate intermediate, with the release of diphosphate. In Salmonella typhimurium (strain LT2 / SGSC1412 / ATCC 700720), this protein is Threonylcarbamoyl-AMP synthase.